A 257-amino-acid chain; its full sequence is UPF0246 protein Rsph17029_0026 (257 aa).

This sequence belongs to the UPF0246 family.

This is UPF0246 protein Rsph17029_0026 from Cereibacter sphaeroides (strain ATCC 17029 / ATH 2.4.9) (Rhodobacter sphaeroides).